A 357-amino-acid polypeptide reads, in one-letter code: Dihydroorotate dehydrogenase (quinone) (357 aa).

FMN is bound by residues 66–70 and Thr-90; that span reads AGFDK. Lys-70 contributes to the substrate binding site. 115–119 contacts substrate; that stretch reads NRMGF. FMN is bound by residues Asn-143 and Asn-176. Residue Asn-176 coordinates substrate. The active-site Nucleophile is the Ser-179. Asn-181 serves as a coordination point for substrate. 2 residues coordinate FMN: Lys-212 and Thr-240. 241–242 provides a ligand contact to substrate; it reads NT. Residues Gly-264, Gly-293, and 314 to 315 each bind FMN; that span reads YT.

It belongs to the dihydroorotate dehydrogenase family. Type 2 subfamily. In terms of assembly, monomer. FMN serves as cofactor.

It localises to the cell membrane. The enzyme catalyses (S)-dihydroorotate + a quinone = orotate + a quinol. Its pathway is pyrimidine metabolism; UMP biosynthesis via de novo pathway; orotate from (S)-dihydroorotate (quinone route): step 1/1. Its function is as follows. Catalyzes the conversion of dihydroorotate to orotate with quinone as electron acceptor. This is Dihydroorotate dehydrogenase (quinone) from Mycobacterium tuberculosis (strain ATCC 25177 / H37Ra).